Reading from the N-terminus, the 374-residue chain is Peptide chain release factor 2 (374 aa).

Residue Gln-252 is modified to N5-methylglutamine.

It belongs to the prokaryotic/mitochondrial release factor family. Methylated by PrmC. Methylation increases the termination efficiency of RF2.

The protein localises to the cytoplasm. Functionally, peptide chain release factor 2 directs the termination of translation in response to the peptide chain termination codons UGA and UAA. In Stenotrophomonas maltophilia (strain R551-3), this protein is Peptide chain release factor 2.